A 398-amino-acid chain; its full sequence is Acetate kinase (398 aa).

A Mg(2+)-binding site is contributed by asparagine 8. An ATP-binding site is contributed by lysine 15. Substrate is bound at residue arginine 89. Aspartate 146 functions as the Proton donor/acceptor in the catalytic mechanism. ATP contacts are provided by residues 206-210 (HIGNG), 283-285 (DMR), and 331-335 (GMGEN). Glutamate 383 lines the Mg(2+) pocket.

This sequence belongs to the acetokinase family. Homodimer. Requires Mg(2+) as cofactor. Mn(2+) serves as cofactor.

The protein resides in the cytoplasm. It catalyses the reaction acetate + ATP = acetyl phosphate + ADP. Its pathway is metabolic intermediate biosynthesis; acetyl-CoA biosynthesis; acetyl-CoA from acetate: step 1/2. Functionally, catalyzes the formation of acetyl phosphate from acetate and ATP. Can also catalyze the reverse reaction. This is Acetate kinase from Streptococcus pyogenes serotype M28 (strain MGAS6180).